The sequence spans 1116 residues: Pleckstrin homology domain-containing family A member 5 (1116 aa).

Ala-2 bears the N-acetylalanine mark. Residues 10-43 (ISLPRSWTYGITRGGRVFFINEEAKSTTWLHPVT) enclose the WW 1 domain. The residue at position 55 (Ser-55) is a Phosphoserine. A WW 2 domain is found at 56–89 (TDLPTGWEEAYTFEGARYYINHNERKVTCKHPVT). Residues 140–163 (SPVGRTSRASKKVHNFGKRSNSIK) form a disordered region. The segment covering 147–156 (RASKKVHNFG) has biased composition (basic residues). The 100-residue stretch at 169 to 268 (PVVRRGWLYK…WMKAMLDAAL (100 aa)) folds into the PH domain. Lys-301 is covalently cross-linked (Glycyl lysine isopeptide (Lys-Gly) (interchain with G-Cter in SUMO2)). A phosphoserine mark is found at Ser-382 and Ser-410. Thr-438 and Thr-460 each carry phosphothreonine. The disordered stretch occupies residues 459 to 495 (RTLPRNSKTRPESICSVTPSTHDKTLGPGAEEKRRSM). The segment covering 479–495 (THDKTLGPGAEEKRRSM) has biased composition (basic and acidic residues). Phosphoserine is present on residues Ser-568, Ser-607, Ser-809, Ser-855, Ser-933, and Ser-937. Disordered stretches follow at residues 928 to 978 (GASD…PATE) and 1025 to 1116 (RNKD…FMCV). Over residues 930–949 (SDQSPLQSPSNLRDNPFRTT) the composition is skewed to polar residues. A compositionally biased stretch (basic and acidic residues) spans 952–978 (RRRDDKELDTAIRENDVKPDHETPATE). The segment covering 1036–1046 (FSPQDETQTAN) has biased composition (polar residues). Residues 1047–1061 (HKPEEHPEENTKNSV) are compositionally biased toward basic and acidic residues. Over residues 1070 to 1085 (SYESTPEVSRGNQTMA) the composition is skewed to polar residues. Residues 1088 to 1101 (SLSPSPESSASPVP) show a composition bias toward low complexity.

As to expression, highly expressed in heart and kidney.

It localises to the cytoplasm. In Homo sapiens (Human), this protein is Pleckstrin homology domain-containing family A member 5 (PLEKHA5).